Reading from the N-terminus, the 273-residue chain is Outer capsid protein VP7 (273 aa).

The protein belongs to the aquareoviridae outer capsid VP7 protein family. As to quaternary structure, interacts with VP4 and VP6.

It localises to the virion. Functionally, interacts with VP4 to form the outer icosahedral capsid with an incomplete T=13 symmetry, about 80 nm in diameter, and consisting of 200 VP4-VP7 trimers. This Ctenopharyngodon idella (Grass carp) protein is Outer capsid protein VP7 (S10).